The sequence spans 295 residues: Bis(5'-nucleosyl)-tetraphosphatase, symmetrical (295 aa).

A disordered region spans residues 271–295 (LSIEHPRHTHTPRRKAKKRHKRSPK). The segment covering 277 to 295 (RHTHTPRRKAKKRHKRSPK) has biased composition (basic residues).

Belongs to the Ap4A hydrolase family.

The catalysed reaction is P(1),P(4)-bis(5'-adenosyl) tetraphosphate + H2O = 2 ADP + 2 H(+). Hydrolyzes diadenosine 5',5'''-P1,P4-tetraphosphate to yield ADP. This Xylella fastidiosa (strain M23) protein is Bis(5'-nucleosyl)-tetraphosphatase, symmetrical.